A 359-amino-acid chain; its full sequence is Diacyltrehalose acyltransferase Chp2 (359 aa).

The helical transmembrane segment at 4 to 24 (VIAGAFAVWLVGWAGGFGTAI) threads the bilayer. One can recognise a PE-PPE domain in the interval 79–316 (PNAKHDLIDY…VLQPQIDAAY (238 aa)).

Belongs to the mycobacterial PPE family.

It localises to the cell inner membrane. With respect to regulation, activity is probably potentiated by the DAT/PAT transporter MmpL10. Inhibited by the lipase inhibitor tetrahydrolipstatin (THL). Involved in the final steps of polyacyltrehalose (PAT) biosynthesis. Catalyzes the transfer of three mycolipenoyl groups onto diacyltrehalose (DAT) to form PAT. This chain is Diacyltrehalose acyltransferase Chp2, found in Mycobacterium tuberculosis (strain ATCC 25618 / H37Rv).